Here is a 1130-residue protein sequence, read N- to C-terminus: MQPPTRAPFFPFSLLRGRKARETCTCRSVASTEGPNTFGPRARPGCHAHQVAPSKESFHSSAFQLVSASRLSPLMSSCFVSFLRYPSFRPSAPFSAPPSSSTVPISTPSDFSHSAPASWRCVPTAPSALHAPFSFTTQAAHLSSCVFDGCSRLPCSEPGSPQTLQRALATTSATAFLRTACMSHRLRRRPDAWTSGCSGQTDNATASPCVRPLLRPPVDTASRAAANDKDAPQPTCFWRNARTSRAVHRNQTDMNFSSFSCSLRPCRHTLAKAAGHHAPLSRHSLQSLPESRIRGGTVSRGDSPGSLTLSPRNMSSDAMPVHPLYFPSAVPFSTTSGSNSSTFSCPSPSSSTSSTSSTSSTSSTSSTSSTSSTSSTSSTSSTSSPFLLSRSHSVDCRACPVSRAPPNPTSLQLLFSLFPFLWPTALKDRLRVLGSVACLVTAKVLTIQAPLLLANLVDAFQVLPHNSPLSPSGASPSSGDTSLLASSGETSSSLSPSAAPAEGAREAGKSGESAGRERRDEGSTVRLSPLAEGPASPATEERTAAGKAGTSVGGRDAGAVHALDTEHLRNTAQIVSVPLGVVCGFPVARIAATGFNELRSTLFTRVSQNASCDFSCHAFLHLHALALFHDKRAGELSVLISRGMKSVTALLNVLLFQMVPTALEFALVLYLLGSKVGGPVACITSLTMAVYVAFTAAVTARRTKIRKEMIAAEQQSVGLLVDSLANAEAVRFFTAEKGELSRFEAVQRRYAEKHVSVNQSLAFLNFGQQLIFNVGVLGSLAYTASQVAAGLLPVGHIVLVSSLLLQLAVPLNFVGTIYRETSLNLADLEKLYELMNHHPPIVNPPDARPFVLKGGAVAFENVRFAYPPSPLRPGSLPSKTGDDEKPEASRMLLDDVSFSVDAGKKVAIVGPSGVGKSTLIKLLFRMFDPASGTVRIDDQDVKELDLHSFRRQIGVVPQDMVLFNDTIEFNIKYGCPSATDEEMRAAAKQAEIDDVIMRMPQGYSTVVGERGLKLSGGERQRIGIARCLLRNPAIAVFDEATSALDSHTEQKILKAFRAMARGRTTLVIAHRLSTISDADKIIYLKEGKIAEMGTHAELLEKERGLYRALWESQQHQEQEEAVSTPDLTLS.

A mitochondrion-targeting transit peptide spans 1 to 65 (MQPPTRAPFF…ESFHSSAFQL (65 aa)). 3 disordered regions span residues 191-212 (DAWT…CVRP), 276-315 (HHAP…RNMS), and 341-385 (STFS…TSSP). Composition is skewed to polar residues over residues 195–206 (SGCSGQTDNATA) and 305–315 (GSLTLSPRNMS). A helical membrane pass occupies residues 406–426 (PNPTSLQLLFSLFPFLWPTAL). Positions 468–502 (PLSPSGASPSSGDTSLLASSGETSSSLSPSAAPAE) are enriched in low complexity. Residues 468-554 (PLSPSGASPS…AGKAGTSVGG (87 aa)) are disordered. The span at 503-523 (GAREAGKSGESAGRERRDEGS) shows a compositional bias: basic and acidic residues. 5 helical membrane passes run 574-594 (IVSV…AATG), 653-673 (VLLF…YLLG), 678-698 (GPVA…TAAV), 761-781 (LAFL…GSLA), and 791-811 (LLPV…AVPL). Positions 587–823 (VARIAATGFN…VGTIYRETSL (237 aa)) constitute an ABC transmembrane type-1 domain. Positions 857 to 1111 (VAFENVRFAY…ERGLYRALWE (255 aa)) constitute an ABC transporter domain. Residue 910–917 (GPSGVGKS) participates in ATP binding.

Belongs to the ABC transporter superfamily. ABCB family. Heavy Metal importer (TC 3.A.1.210) subfamily. Homodimer.

It localises to the mitochondrion membrane. In terms of biological role, probably transports iron-sulfur clusters in an ATP-dependent manner. Plays a role in [Fe-S] proteins homeostasis. Required for optimal parasite growth and lytic cycle. In Toxoplasma gondii (strain ATCC 50611 / Me49), this protein is ABC transporter ATM1.